The chain runs to 392 residues: Fasciculation and elongation protein zeta-1 (392 aa).

Residues 1–37 are disordered; sequence MEAPLVSLDEEFEDLRPSCSEDPEEKPQCFYGSSPHH. A Phosphoserine modification is found at S58. The disordered stretch occupies residues 175 to 198; that stretch reads MQNSPDPEEEEEVLEEEDGGETSS. Residues 180–194 show a composition bias toward acidic residues; the sequence is DPEEEEEVLEEEDGG. Residues 230 to 298 adopt a coiled-coil conformation; the sequence is SELTELLDQV…KKRRKEKGLS (69 aa). A phosphoserine mark is found at S298 and S316.

It belongs to the zygin family. In terms of assembly, homodimer; disulfide-linked. May form heterodimers with FEZ2. Interacts with the NH2-terminal variable region (V1) of PKC zeta and weakly with that of PKC epsilon. Interacts with UBE4B. Interacts with SAP30L. Interacts with SCOC and ULK1; SCOC interferes with ULK1-binding to FEZ1. Directly interacts with SCOC and UVRAG. Stabilizes the interaction between SCOC and UVRAG during amino acid starvation. In terms of processing, phosphorylated by protein kinase C zeta; which enhances interaction with UBE4B and polyubiquitination. Post-translationally, polyubiquitinated in a UBE4B-dependent manner; which does not lead to proteasomal degradation and may be important for neurogenic activity. Polyubiquitin linkage seems to be mainly through Lys-26. In terms of tissue distribution, mainly expressed in brain.

It is found in the cytoplasm. Its subcellular location is the cytoskeleton. It localises to the microtubule organizing center. The protein localises to the centrosome. The protein resides in the cell membrane. Functionally, may be involved in axonal outgrowth as component of the network of molecules that regulate cellular morphology and axon guidance machinery. Able to restore partial locomotion and axonal fasciculation to C.elegans unc-76 mutants in germline transformation experiments. May participate in the transport of mitochondria and other cargos along microtubules. The chain is Fasciculation and elongation protein zeta-1 (FEZ1) from Homo sapiens (Human).